We begin with the raw amino-acid sequence, 368 residues long: tRNA-specific 2-thiouridylase MnmA (368 aa).

ATP is bound by residues 24–31 (AMSGGVDS) and Leu50. Cys117 (nucleophile) is an active-site residue. A disulfide bond links Cys117 and Cys213. Gly141 is a binding site for ATP. The tract at residues 163–165 (KDQ) is interaction with tRNA. Residue Cys213 is the Cysteine persulfide intermediate of the active site.

This sequence belongs to the MnmA/TRMU family.

It localises to the cytoplasm. It catalyses the reaction S-sulfanyl-L-cysteinyl-[protein] + uridine(34) in tRNA + AH2 + ATP = 2-thiouridine(34) in tRNA + L-cysteinyl-[protein] + A + AMP + diphosphate + H(+). Functionally, catalyzes the 2-thiolation of uridine at the wobble position (U34) of tRNA, leading to the formation of s(2)U34. The polypeptide is tRNA-specific 2-thiouridylase MnmA (Wolbachia pipientis subsp. Culex pipiens (strain wPip)).